Here is a 330-residue protein sequence, read N- to C-terminus: Beta-ketoacyl-[acyl-carrier-protein] synthase III (330 aa).

Active-site residues include Cys114 and His257. Residues 258–262 (QANLR) are ACP-binding. The active site involves Asn287.

It belongs to the thiolase-like superfamily. FabH family. Homodimer.

The protein localises to the cytoplasm. It catalyses the reaction malonyl-[ACP] + acetyl-CoA + H(+) = 3-oxobutanoyl-[ACP] + CO2 + CoA. It participates in lipid metabolism; fatty acid biosynthesis. In terms of biological role, catalyzes the condensation reaction of fatty acid synthesis by the addition to an acyl acceptor of two carbons from malonyl-ACP. Catalyzes the first condensation reaction which initiates fatty acid synthesis and may therefore play a role in governing the total rate of fatty acid production. Possesses both acetoacetyl-ACP synthase and acetyl transacylase activities. Its substrate specificity determines the biosynthesis of branched-chain and/or straight-chain of fatty acids. This is Beta-ketoacyl-[acyl-carrier-protein] synthase III from Oleidesulfovibrio alaskensis (strain ATCC BAA-1058 / DSM 17464 / G20) (Desulfovibrio alaskensis).